A 1048-amino-acid polypeptide reads, in one-letter code: uncharacterized protein (1048 aa).

A disordered region spans residues 601–629; sequence ENQINEEQQTNVENEQQTEQQFENEDKET. The segment covering 605–621 has biased composition (low complexity); it reads NEEQQTNVENEQQTEQQ.

This is an uncharacterized protein from Methanocaldococcus jannaschii (strain ATCC 43067 / DSM 2661 / JAL-1 / JCM 10045 / NBRC 100440) (Methanococcus jannaschii).